A 545-amino-acid chain; its full sequence is Threonine--tRNA ligase catalytic subunit (545 aa).

Residues 139-433 (DHRLIGEKLD…LLEHFKGKLP (295 aa)) are catalytic. Residues Cys-231, His-282, and His-410 each coordinate Zn(2+).

This sequence belongs to the class-II aminoacyl-tRNA synthetase family. Homodimer. Probably interacts with its editing subunit. Zn(2+) is required as a cofactor.

The protein localises to the cytoplasm. The enzyme catalyses tRNA(Thr) + L-threonine + ATP = L-threonyl-tRNA(Thr) + AMP + diphosphate + H(+). Functionally, catalyzes the attachment of threonine to tRNA(Thr) in a two-step reaction: L-threonine is first activated by ATP to form Thr-AMP and then transferred to the acceptor end of tRNA(Thr). Also activates L-serine and transfers it to tRNA(Thr) but cannot deacylate incorrectly charged amino acid; unlike most archaea the editing function is found in a freestanding protein. This Saccharolobus islandicus (strain M.16.27) (Sulfolobus islandicus) protein is Threonine--tRNA ligase catalytic subunit.